Here is a 298-residue protein sequence, read N- to C-terminus: Zinc finger protein-like 1 homolog (298 aa).

Residues 1–43 (MGLCKCPKRLVTNQFCFEHRVNVCEHCMVQSHPKCIVQSYLQW) form a B box-type; degenerate zinc finger. An RING-type; atypical zinc finger spans residues 53–101 (CTLCGTTLEQGDCVRLVCYHVFHWDCLNARQAALPANTAPRGHQCPACT). The tract at residues 199–230 (AGDYASSRRPLLPRQSPIGGTDRDDNKYQRRT) is disordered. Phosphoserine is present on serine 214. The chain crosses the membrane as a helical span at residues 255–275 (WFLVTAGILAFVLFVYLMAWL).

The protein belongs to the ZFPL1 family.

It localises to the membrane. In Drosophila erecta (Fruit fly), this protein is Zinc finger protein-like 1 homolog.